Here is a 221-residue protein sequence, read N- to C-terminus: Ubiquitin-conjugating enzyme E2 S (221 aa).

One can recognise a UBC core domain in the interval 11 to 157 (QVLRLVYKEV…AHLLTEIHAM (147 aa)). Cys-95 acts as the Glycyl thioester intermediate in catalysis. The disordered stretch occupies residues 158–221 (GGTSGAPQEP…TDKKRALRRL (64 aa)). Low complexity predominate over residues 193 to 206 (GTGTNNSNISNTNI). The segment covering 208–221 (AKKKTDKKRALRRL) has biased composition (basic residues).

This sequence belongs to the ubiquitin-conjugating enzyme family.

The enzyme catalyses S-ubiquitinyl-[E1 ubiquitin-activating enzyme]-L-cysteine + [E2 ubiquitin-conjugating enzyme]-L-cysteine = [E1 ubiquitin-activating enzyme]-L-cysteine + S-ubiquitinyl-[E2 ubiquitin-conjugating enzyme]-L-cysteine.. It functions in the pathway protein modification; protein ubiquitination. In terms of biological role, catalyzes the covalent attachment of ubiquitin to other proteins. Acts as an essential factor of the anaphase promoting complex/cyclosome (APC/C), a cell cycle-regulated ubiquitin ligase that controls progression through mitosis. Acts by specifically elongating 'Lys-11'-linked polyubiquitin chains initiated by the E2 enzyme ube2c/ubch10 on APC/C substrates, enhancing the degradation of APC/C substrates by the proteasome and promoting mitotic exit. This Danio rerio (Zebrafish) protein is Ubiquitin-conjugating enzyme E2 S (ube2s).